A 255-amino-acid polypeptide reads, in one-letter code: Coenzyme F420:L-glutamate ligase (255 aa).

Residues 11 to 14 (IPLI), 40 to 41 (ST), and Lys-45 each bind GTP. Asp-109 serves as a coordination point for a divalent metal cation. Residue Asn-112 participates in GTP binding. Positions 150, 151, and 208 each coordinate a divalent metal cation. GTP is bound at residue 206–213 (MGEGAGGT).

This sequence belongs to the CofE family. Homodimer. Mg(2+) serves as cofactor. It depends on Mn(2+) as a cofactor. K(+) is required as a cofactor.

The catalysed reaction is oxidized coenzyme F420-0 + GTP + L-glutamate = oxidized coenzyme F420-1 + GDP + phosphate + H(+). It carries out the reaction oxidized coenzyme F420-1 + GTP + L-glutamate = oxidized coenzyme F420-2 + GDP + phosphate + H(+). Its pathway is cofactor biosynthesis; coenzyme F420 biosynthesis. Its function is as follows. Catalyzes the GTP-dependent successive addition of two or more gamma-linked L-glutamates to the L-lactyl phosphodiester of 7,8-didemethyl-8-hydroxy-5-deazariboflavin (F420-0) to form coenzyme F420-0-glutamyl-glutamate (F420-2) or polyglutamated F420 derivatives. This chain is Coenzyme F420:L-glutamate ligase, found in Methanosarcina barkeri (strain Fusaro / DSM 804).